The primary structure comprises 340 residues: Glycerol-3-phosphate dehydrogenase [NAD(P)+] (340 aa).

Serine 12, tryptophan 13, and lysine 110 together coordinate NADPH. Sn-glycerol 3-phosphate is bound by residues lysine 110, glycine 141, and serine 143. Alanine 145 serves as a coordination point for NADPH. Lysine 196, aspartate 249, serine 259, arginine 260, and asparagine 261 together coordinate sn-glycerol 3-phosphate. Lysine 196 acts as the Proton acceptor in catalysis. Residue arginine 260 coordinates NADPH. Residues valine 284 and glutamate 286 each contribute to the NADPH site.

The protein belongs to the NAD-dependent glycerol-3-phosphate dehydrogenase family.

The protein resides in the cytoplasm. The catalysed reaction is sn-glycerol 3-phosphate + NAD(+) = dihydroxyacetone phosphate + NADH + H(+). It catalyses the reaction sn-glycerol 3-phosphate + NADP(+) = dihydroxyacetone phosphate + NADPH + H(+). Its pathway is membrane lipid metabolism; glycerophospholipid metabolism. Functionally, catalyzes the reduction of the glycolytic intermediate dihydroxyacetone phosphate (DHAP) to sn-glycerol 3-phosphate (G3P), the key precursor for phospholipid synthesis. The polypeptide is Glycerol-3-phosphate dehydrogenase [NAD(P)+] (Latilactobacillus sakei subsp. sakei (strain 23K) (Lactobacillus sakei subsp. sakei)).